Reading from the N-terminus, the 317-residue chain is tRNA pseudouridine synthase B (317 aa).

The active-site Nucleophile is Asp-47.

This sequence belongs to the pseudouridine synthase TruB family. Type 1 subfamily.

It catalyses the reaction uridine(55) in tRNA = pseudouridine(55) in tRNA. Responsible for synthesis of pseudouridine from uracil-55 in the psi GC loop of transfer RNAs. The chain is tRNA pseudouridine synthase B from Vibrio atlanticus (strain LGP32) (Vibrio splendidus (strain Mel32)).